The primary structure comprises 554 residues: Phospho-2-dehydro-3-deoxyheptonate aldolase 1, chloroplastic (554 aa).

The transit peptide at 1–39 (MSLATSSSMAGGAAVVPRSATATTASAFVTMKRRATAVR) directs the protein to the chloroplast. The segment at 41–70 (VHAAEPSKNPPVGVPSAAKTSSPSVAAPEK) is disordered.

The protein belongs to the class-II DAHP synthase family.

The protein resides in the plastid. It is found in the chloroplast. It catalyses the reaction D-erythrose 4-phosphate + phosphoenolpyruvate + H2O = 7-phospho-2-dehydro-3-deoxy-D-arabino-heptonate + phosphate. It participates in metabolic intermediate biosynthesis; chorismate biosynthesis; chorismate from D-erythrose 4-phosphate and phosphoenolpyruvate: step 1/7. The sequence is that of Phospho-2-dehydro-3-deoxyheptonate aldolase 1, chloroplastic (DAHPS1) from Oryza sativa subsp. japonica (Rice).